The following is a 189-amino-acid chain: Probable nicotinate-nucleotide adenylyltransferase (189 aa).

It belongs to the NadD family.

The enzyme catalyses nicotinate beta-D-ribonucleotide + ATP + H(+) = deamido-NAD(+) + diphosphate. It participates in cofactor biosynthesis; NAD(+) biosynthesis; deamido-NAD(+) from nicotinate D-ribonucleotide: step 1/1. Its function is as follows. Catalyzes the reversible adenylation of nicotinate mononucleotide (NaMN) to nicotinic acid adenine dinucleotide (NaAD). In Bacillus cereus (strain B4264), this protein is Probable nicotinate-nucleotide adenylyltransferase.